Here is a 22-residue protein sequence, read N- to C-terminus: Mu-conotoxin TIIIA (22 aa).

Intrachain disulfides connect Cys-4/Cys-16, Cys-5/Cys-21, and Cys-11/Cys-22. A 4-hydroxyproline mark is found at Pro-8 and Pro-18. Residue Cys-22 is modified to Cysteine amide.

It belongs to the conotoxin M superfamily. In terms of tissue distribution, expressed by the venom duct.

It localises to the secreted. Mu-conotoxins block voltage-gated sodium channels (Nav). This synthetic toxin reversibly and potently blocks rNav1.4/SCN4A (IC(50) is 9 nM) and rNav1.2/SCN2A (IC(50) is 40 nM). It also moderately blocks rNav1.1/SCN1A, rNav1.3/SCN3A, and rNav1.6/SCN8A. The block of SCN1A and SCN2A is modified when beta-subunits are coexpressed with alpha subunits. Hence, blocks of channels containing beta-1 and beta-3 subunits are more potent (compared to channels without beta subunits), whereas blocks of channels containing beta-2 and beta-4 subunits are less potent (compared to channels without beta subunits). The sequence is that of Mu-conotoxin TIIIA from Conus tulipa (Fish-hunting cone snail).